The chain runs to 285 residues: UPF0603 protein At1g54780, chloroplastic (285 aa).

Disordered stretches follow at residues 1-48 and 228-251; these read METL…LSTR and GQPDPGGPTVKDSKRESNFKTKEE. Residues 22–40 show a composition bias toward polar residues; that stretch reads HQTKPTSHSLSLSKPTTFS. Basic and acidic residues predominate over residues 238 to 251; sequence KDSKRESNFKTKEE. Residues 259-279 traverse the membrane as a helical segment; the sequence is FSLVVGGLLVIAFVVPMAQYF.

This sequence belongs to the UPF0603 family.

The protein resides in the plastid. Its subcellular location is the chloroplast thylakoid membrane. This is UPF0603 protein At1g54780, chloroplastic from Arabidopsis thaliana (Mouse-ear cress).